Here is a 159-residue protein sequence, read N- to C-terminus: SsrA-binding protein (159 aa).

The tract at residues 131-159 (KGKKLHDKRESEKERDWNRQKSRLLKDNG) is disordered. Over residues 137–159 (DKRESEKERDWNRQKSRLLKDNG) the composition is skewed to basic and acidic residues.

It belongs to the SmpB family.

It is found in the cytoplasm. In terms of biological role, required for rescue of stalled ribosomes mediated by trans-translation. Binds to transfer-messenger RNA (tmRNA), required for stable association of tmRNA with ribosomes. tmRNA and SmpB together mimic tRNA shape, replacing the anticodon stem-loop with SmpB. tmRNA is encoded by the ssrA gene; the 2 termini fold to resemble tRNA(Ala) and it encodes a 'tag peptide', a short internal open reading frame. During trans-translation Ala-aminoacylated tmRNA acts like a tRNA, entering the A-site of stalled ribosomes, displacing the stalled mRNA. The ribosome then switches to translate the ORF on the tmRNA; the nascent peptide is terminated with the 'tag peptide' encoded by the tmRNA and targeted for degradation. The ribosome is freed to recommence translation, which seems to be the essential function of trans-translation. The protein is SsrA-binding protein of Rhizobium etli (strain CIAT 652).